The chain runs to 325 residues: MGGWSIALHGGAGDIPFSLPPERRQPREEGLRHCLQIGVEALKSQKPPLDVVELVVRELENIQHFNAGIGSVLTNSGTVEMEASIMDGKTMKCGAVSGLSTVLNPISLARLVMDKTPHIYLAFQGAQDFAKQQGVETVDSSHFITAENVERLKLAIEANRVQVDYSQYNYPQPAQDDAEKELPLANGDSQIGTVGCVAVDSHGNLASATSTGGLVNKMVGRIGDTPLIGAGTYANELCAVSATGKGEAIISATVARDVAALMEFKGLSLKEAADYVVHERTPKGTVGLIAVSAAGEIAMPFNTTGMFRASATEDGYSEIAIWPTT.

T193 (nucleophile) is an active-site residue. Substrate is bound by residues 221–224 (RIGD) and 243–246 (TGKG).

This sequence belongs to the Ntn-hydrolase family. In terms of assembly, heterotetramer of two alpha and two beta chains arranged as a dimer of alpha/beta heterodimers. Post-translationally, cleaved into an alpha and beta chain by autocatalysis; this activates the enzyme. The N-terminal residue of the beta subunit is responsible for the nucleophile hydrolase activity. Developing seeds.

It carries out the reaction Cleavage of a beta-linked Asp residue from the N-terminus of a polypeptide.. Its function is as follows. Acts in asparagine catabolism but also in the final steps of protein degradation via hydrolysis of a range of isoaspartyl dipeptides. The polypeptide is Isoaspartyl peptidase/L-asparaginase (Lupinus angustifolius (Narrow-leaved blue lupine)).